The chain runs to 30 residues: Dermaseptin-S3 (30 aa).

Belongs to the frog skin active peptide (FSAP) family. Dermaseptin subfamily. In terms of assembly, monomer and oligomer. Forms aggregates in aqueous environments. Expressed by the skin glands.

The protein localises to the secreted. Its function is as follows. Potent antimicrobial peptide with activity against bacteria and protozoa. Also has activity against fungi. Probably acts by disturbing membrane functions with its amphipathic structure. Binds to healthy erythrocytes (this binding is receptor independent), but has very weak hemolytic activity. Does not bind to P.falciparum infected erythrocytes, but accumulates within the parasite. Kills the parasite, but has no hemolytic activity on the host cell. In Phyllomedusa sauvagei (Sauvage's leaf frog), this protein is Dermaseptin-S3.